The chain runs to 181 residues: MKHLVASSILGVFVLTPSLAMMNIRFNHPLYGSFGTQIIHIGAFQGMVSIRDNNIFSEWDGILDYKNALLVAKVFNKMACVLARMDKAVFPSLDDISKALDKQAFKYYPSTRGLTYTVLPSWVKNLAQYGKPIKNMCRDDPTYFAQQQKEGTALAIDSNSCFEIQLLSFMGLFICGETPGL.

An N-terminal signal peptide occupies residues methionine 1–alanine 20. One can recognise a BRICHOS domain in the interval asparagine 53–alanine 145. Residues cysteine 80 and cysteine 137 are joined by a disulfide bond.

The protein belongs to the gastrokine family.

It localises to the secreted. Its function is as follows. May inhibit gastric epithelial cell proliferation. This Homo sapiens (Human) protein is Gastrokine-3 (GKN3P).